A 301-amino-acid polypeptide reads, in one-letter code: 2-oxo-3-(phosphooxy)propyl 3-oxoalkanoate synthase (301 aa).

The protein belongs to the AfsA family.

It catalyses the reaction a medium-chain 3-oxoacyl-[ACP] + dihydroxyacetone phosphate = a (4-alkanoyl-5-oxo-2,5-dihydrofuran-3-yl)methyl phosphate + holo-[ACP] + H2O. Involved in the biosynthesis of A factor (2-isocapryloyl-3R-hydroxymethyl-gamma-butyrolactone), a gamma-butyrolactone autoregulator that triggers secondary metabolism and morphogenesis in Streptomyces. Catalyzes beta-ketoacyl transfer from 8-methyl-3-oxononanoyl-acyl carrier protein (ACP) to the hydroxyl group of dihydroxyacetone phosphate (DHAP), thus producing an 8-methyl-3-oxononanoyl-DHAP ester. The polypeptide is 2-oxo-3-(phosphooxy)propyl 3-oxoalkanoate synthase (Streptomyces griseus).